The following is a 321-amino-acid chain: NADPH-dependent D-xylose reductase (321 aa).

Catalysis depends on Tyr-50, which acts as the Proton donor. A substrate-binding site is contributed by His-112. NADP(+) is bound by residues 167–168 (SN), 216–225 (SSFGPQSFVE), and 272–282 (KSNKKERLLGN).

The protein belongs to the aldo/keto reductase family.

The enzyme catalyses xylitol + NAD(+) = D-xylose + NADH + H(+). The catalysed reaction is xylitol + NADP(+) = D-xylose + NADPH + H(+). It participates in carbohydrate metabolism; D-xylose degradation. In terms of biological role, reduces D-xylose into xylitol. Preferentially utilizes NADPH as a cosubstrate. The polypeptide is NADPH-dependent D-xylose reductase (XYL1) (Candida boidinii (Yeast)).